The chain runs to 148 residues: uncharacterized protein (148 aa).

The region spanning 2–63 is the HTH asnC-type domain; it reads LDELDKRILY…LINPFKAGYE (62 aa). The segment at residues 21–40 is a DNA-binding region (H-T-H motif); sequence YSEIARILGVPESTVRVRVK.

This is an uncharacterized protein from Pyrococcus furiosus (strain ATCC 43587 / DSM 3638 / JCM 8422 / Vc1).